A 377-amino-acid polypeptide reads, in one-letter code: Membrane progestin receptor epsilon (377 aa).

Positions 1–40 (MPRRLQPRGAGTKGPPAPAPAASGAARNSHSAASRDPPAS) are disordered. At 1–86 (MPRRLQPRGA…VLKPTNETLN (86 aa)) the chain is on the cytoplasmic side. Over residues 9–26 (GAGTKGPPAPAPAASGAA) the composition is skewed to low complexity. Residues 87-107 (FWTHFIPLLLFLSKFCRLFFL) traverse the membrane as a helical segment. At 108–116 (SGGDVPFHH) the chain is on the extracellular side. A helical transmembrane segment spans residues 117–137 (PWLLPLWCYASGVLLTFAMSC). Residues 138–162 (TAHVFSCLSLRLRAAFFYLDYASIS) are Cytoplasmic-facing. The helical transmembrane segment at 163–183 (YYGFGSTVAYYYYLLPGLSLL) threads the bilayer. At 184–205 (DARVMTPYLQQRLGWHVDCTRL) the chain is on the extracellular side. The helical transmembrane segment at 206–226 (IAAYRALVLPVAFVLAVACTV) threads the bilayer. Residues 227–243 (ACCKSRTDWCTYPFALR) are Cytoplasmic-facing. The helical transmembrane segment at 244-264 (TFVFVMPLSMACPIMLESWLF) threads the bilayer. The Extracellular portion of the chain corresponds to 265–301 (DLRGENPTLFVHFYRRYFWLVVAAFFNVSKIPERIQP). A helical transmembrane segment spans residues 302–322 (GLFDIIGHSHQLFHIFTFLSI). Over 323 to 343 (YDQVYYVEEGLRQFLQAPPAA) the chain is Cytoplasmic. A helical transmembrane segment spans residues 344–364 (PTFSGTVGYMLLLVVCLGLVI). Topologically, residues 365 to 377 (RKFLNSSEFCSKK) are extracellular.

It belongs to the ADIPOR family. In terms of assembly, homodimer. As to expression, expression levels vary widely in a range of tissues. Expressed in the brain, at high level in the pituitary gland and also in hypothalamus, limbic system, caudate nucleus accumens, pons and olfactory bulb.

The protein resides in the cell membrane. In terms of biological role, plasma membrane progesterone (P4) receptor coupled to G proteins. Seems to act through a G(s) mediated pathway. May be involved in regulating rapid P4 signaling in the nervous system. Also binds dehydroepiandrosterone (DHEA), pregnanolone, pregnenolone and allopregnanolone. This chain is Membrane progestin receptor epsilon, found in Homo sapiens (Human).